The following is a 186-amino-acid chain: Adenine phosphoribosyltransferase (186 aa).

This sequence belongs to the purine/pyrimidine phosphoribosyltransferase family. As to quaternary structure, homodimer.

The protein localises to the cytoplasm. The catalysed reaction is AMP + diphosphate = 5-phospho-alpha-D-ribose 1-diphosphate + adenine. It participates in purine metabolism; AMP biosynthesis via salvage pathway; AMP from adenine: step 1/1. Its function is as follows. Catalyzes a salvage reaction resulting in the formation of AMP, that is energically less costly than de novo synthesis. The chain is Adenine phosphoribosyltransferase from Xanthomonas oryzae pv. oryzae (strain MAFF 311018).